Here is a 426-residue protein sequence, read N- to C-terminus: Serine--tRNA ligase (426 aa).

231–233 (TLE) contributes to the L-serine binding site. Residue 262 to 264 (RSE) coordinates ATP. Glutamate 285 is an L-serine binding site. 349–352 (EISS) contributes to the ATP binding site. Serine 385 is an L-serine binding site.

It belongs to the class-II aminoacyl-tRNA synthetase family. Type-1 seryl-tRNA synthetase subfamily. Homodimer. The tRNA molecule binds across the dimer.

It localises to the cytoplasm. The catalysed reaction is tRNA(Ser) + L-serine + ATP = L-seryl-tRNA(Ser) + AMP + diphosphate + H(+). It catalyses the reaction tRNA(Sec) + L-serine + ATP = L-seryl-tRNA(Sec) + AMP + diphosphate + H(+). It participates in aminoacyl-tRNA biosynthesis; selenocysteinyl-tRNA(Sec) biosynthesis; L-seryl-tRNA(Sec) from L-serine and tRNA(Sec): step 1/1. Its function is as follows. Catalyzes the attachment of serine to tRNA(Ser). Is also able to aminoacylate tRNA(Sec) with serine, to form the misacylated tRNA L-seryl-tRNA(Sec), which will be further converted into selenocysteinyl-tRNA(Sec). In Malacoplasma penetrans (strain HF-2) (Mycoplasma penetrans), this protein is Serine--tRNA ligase.